A 299-amino-acid chain; its full sequence is Type II restriction enzyme BglI (299 aa).

D116, D142, and I143 together coordinate Mg(2+).

In terms of assembly, homodimer. Requires Mg(2+) as cofactor.

The catalysed reaction is Endonucleolytic cleavage of DNA to give specific double-stranded fragments with terminal 5'-phosphates.. Its function is as follows. A P subtype restriction enzyme that recognizes the double-stranded sequence 5'-GCCNNNNNGGC-3' and cleaves before N-8. The protein is Type II restriction enzyme BglI (bglIR) of Bacillus subtilis.